The following is a 304-amino-acid chain: PHO85 cyclin-9 (304 aa).

Residues 19–146 (EMIQFLATST…LLEYLNWDVR (128 aa)) enclose the Cyclin N-terminal domain.

The protein belongs to the cyclin family. PCL1,2 subfamily. Forms a cyclin-CDK complex with PHO85.

Functionally, m/G1-specific cyclin partner of the cyclin-dependent kinase (CDK) PHO85. May have a role in bud site selection in G1 phase. The protein is PHO85 cyclin-9 (PCL9) of Saccharomyces cerevisiae (strain ATCC 204508 / S288c) (Baker's yeast).